The chain runs to 176 residues: Probable inosine/xanthosine triphosphatase (176 aa).

Residue Asp-36 coordinates Mg(2+).

It belongs to the YjjX NTPase family. As to quaternary structure, homodimer. Mg(2+) serves as cofactor. The cofactor is Mn(2+).

It catalyses the reaction XTP + H2O = XDP + phosphate + H(+). The catalysed reaction is ITP + H2O = IDP + phosphate + H(+). Its function is as follows. Phosphatase that hydrolyzes non-canonical purine nucleotides such as XTP and ITP to their respective diphosphate derivatives. Probably excludes non-canonical purines from DNA/RNA precursor pool, thus preventing their incorporation into DNA/RNA and avoiding chromosomal lesions. In Saccharolobus islandicus (strain Y.G.57.14 / Yellowstone #1) (Sulfolobus islandicus), this protein is Probable inosine/xanthosine triphosphatase.